Consider the following 137-residue polypeptide: MKPPSAQSSPAAVAAAAPAMDSAAAADLTDVLCEFDAVLADFASPFHERHFHYEEHLERMKRRSSASVSDSSGFSDSESADSVYRDSFTFSDEKLNSPTNSSPALLPSAVTPRKAKLGDTKELEDFIADLDRTLASM.

The disordered stretch occupies residues 57 to 116; sequence LERMKRRSSASVSDSSGFSDSESADSVYRDSFTFSDEKLNSPTNSSPALLPSAVTPRKAK. The span at 65–82 shows a compositional bias: low complexity; sequence SASVSDSSGFSDSESADS. Residues Ser67, Ser69, Ser71, Ser75, Ser91, and Ser97 each carry the phosphoserine modification. The residue at position 111 (Thr111) is a Phosphothreonine.

As to quaternary structure, interacts with CDK1 and PLK1. Interacts with SMAD3.

Its subcellular location is the cytoplasm. The protein localises to the nucleus. The protein resides in the cytoskeleton. It is found in the microtubule organizing center. It localises to the centrosome. Modulates the activity of cell cycle-specific kinases. Enhances CDK1 activity. May contribute to the regulation of the cell cycle. May inhibit growth of glioma cells by promoting arrest of mitotic progression at the G2/M transition. Fibrogenic factor contributing to the pathogenesis of renal fibrosis through fibroblast activation. This Mus musculus (Mouse) protein is Regulator of cell cycle RGCC (Rgcc).